The sequence spans 946 residues: Rho GTPase-activating protein 4 (946 aa).

The region spanning 19 to 317 (TQVKEMRWQL…AVEALDPPGD (299 aa)) is the F-BAR domain. Residues 128 to 195 (LAQRLSHIAE…REAERQEEKR (68 aa)) are a coiled coil. Residues 187–196 (EAERQEEKRA) are compositionally biased toward basic and acidic residues. Disordered stretches follow at residues 187-220 (EAER…SLKK) and 402-435 (LDSF…QQQE). Low complexity-rich tracts occupy residues 202 to 211 (TTTAGATEAG) and 407 to 419 (TSPS…STSS). One can recognise a Rho-GAP domain in the interval 507-695 (GDMEKFIQSS…TLIVQPDRVF (189 aa)). The region spanning 746-805 (EGVVEAVACFAYTGRTAQELSFRRGDVLRLHERASSDWWRGEHNGMRGLIPHKYITLPAG) is the SH3 domain. Residues Ser-860, Ser-901, and Ser-906 each carry the phosphoserine modification. The disordered stretch occupies residues 885-946 (KTSVRQGLGP…QGLDTTPKPH (62 aa)). The segment covering 901 to 910 (SPGPRSPKAP) has biased composition (pro residues). Positions 924–934 (GPGAPASPSAS) are enriched in low complexity.

Interacts with NCKAP1L. In terms of tissue distribution, predominantly in hematopoietic cells (spleen, thymus and leukocytes); low levels in placenta, lung and various fetal tissues.

The protein resides in the cytoplasm. Inhibitory effect on stress fiber organization. May down-regulate Rho-like GTPase in hematopoietic cells. The chain is Rho GTPase-activating protein 4 from Homo sapiens (Human).